The following is a 371-amino-acid chain: UDP-N-acetylglucosamine--N-acetylmuramyl-(pentapeptide) pyrophosphoryl-undecaprenol N-acetylglucosamine transferase (371 aa).

UDP-N-acetyl-alpha-D-glucosamine is bound by residues 15-17 (TGG), Asn-126, Arg-172, Ser-199, Ile-256, 275-280 (ALTVSE), and Gln-301.

The protein belongs to the glycosyltransferase 28 family. MurG subfamily.

The protein localises to the cell inner membrane. It catalyses the reaction di-trans,octa-cis-undecaprenyl diphospho-N-acetyl-alpha-D-muramoyl-L-alanyl-D-glutamyl-meso-2,6-diaminopimeloyl-D-alanyl-D-alanine + UDP-N-acetyl-alpha-D-glucosamine = di-trans,octa-cis-undecaprenyl diphospho-[N-acetyl-alpha-D-glucosaminyl-(1-&gt;4)]-N-acetyl-alpha-D-muramoyl-L-alanyl-D-glutamyl-meso-2,6-diaminopimeloyl-D-alanyl-D-alanine + UDP + H(+). It participates in cell wall biogenesis; peptidoglycan biosynthesis. Functionally, cell wall formation. Catalyzes the transfer of a GlcNAc subunit on undecaprenyl-pyrophosphoryl-MurNAc-pentapeptide (lipid intermediate I) to form undecaprenyl-pyrophosphoryl-MurNAc-(pentapeptide)GlcNAc (lipid intermediate II). The polypeptide is UDP-N-acetylglucosamine--N-acetylmuramyl-(pentapeptide) pyrophosphoryl-undecaprenol N-acetylglucosamine transferase (Francisella philomiragia subsp. philomiragia (strain ATCC 25017 / CCUG 19701 / FSC 153 / O#319-036)).